Reading from the N-terminus, the 603-residue chain is Isocitrate dehydrogenase kinase/phosphatase (603 aa).

ATP is bound by residues 327 to 333 (APGIKGL) and lysine 348. Aspartate 383 is an active-site residue.

This sequence belongs to the AceK family.

It localises to the cytoplasm. The catalysed reaction is L-seryl-[isocitrate dehydrogenase] + ATP = O-phospho-L-seryl-[isocitrate dehydrogenase] + ADP + H(+). In terms of biological role, bifunctional enzyme which can phosphorylate or dephosphorylate isocitrate dehydrogenase (IDH) on a specific serine residue. This is a regulatory mechanism which enables bacteria to bypass the Krebs cycle via the glyoxylate shunt in response to the source of carbon. When bacteria are grown on glucose, IDH is fully active and unphosphorylated, but when grown on acetate or ethanol, the activity of IDH declines drastically concomitant with its phosphorylation. The polypeptide is Isocitrate dehydrogenase kinase/phosphatase (Burkholderia mallei (strain ATCC 23344)).